The primary structure comprises 275 residues: 4,5-DOPA dioxygenase extradiol 1 (275 aa).

Zn(2+)-binding residues include His-22, His-60, His-182, and His-236.

This sequence belongs to the DODA-type extradiol aromatic ring-opening dioxygenase family. Requires Zn(2+) as cofactor.

It catalyses the reaction L-dopa + O2 = 4-(L-alanin-3-yl)-2-hydroxy-cis,cis-muconate 6-semialdehyde + H(+). Its pathway is pigment biosynthesis; betalain biosynthesis. Functionally, opens the cyclic ring of dihydroxy-phenylalanine (DOPA) between carbons 4 and 5, thus producing an unstable seco-DOPA that rearranges nonenzymatically to betalamic acid. The polypeptide is 4,5-DOPA dioxygenase extradiol 1 (Beta vulgaris (Sugar beet)).